The primary structure comprises 391 residues: MENQAHIAGEKKGIMEKIKEKLPGGHGDHKETAGTHGHPGTATHGAPATGGAYGQQGHAGTTGTGLHGAHAGEKKGVMENIKDKLPGGHQDHQQTGGTYGQQGHTGTATHGTPATGGTYGQQGHTGTATHGTPATGGTYGEQGHTGVTGTGTHGTGEKKGVMENIKEKLPGGHGDHQQTGGTYGQQGHTGTATHGTPAGGGTYEQHGHTGMTGTGTHGTGEKKGVMENIKDKLPGGHGDHQQTGGTYGQQGHTGTATQGTPAGGGTYEQHGHTGMTGAGTHSTGEKKGVMENIKEKLPGGHSDHQQTGGAYGQQGHTGTATHGTPAGGGTYGQHGHAGVIGTETHGTTATGGTHGQHGHTGTTGTGTHGSDGIGEKKSLMDKIKDKLPGQH.

Repeat copies occupy residues Gly-9–Glu-31, Thr-49–Thr-62, Gly-72–Gln-94, Thr-95–Ala-108, Thr-115–Ala-128, Thr-135–Thr-148, Gly-156–Gln-178, Thr-179–Ala-192, Gly-199–Thr-212, Gly-220–Gln-242, Thr-243–Ala-256, Gly-263–Thr-276, Gly-284–Gln-306, Thr-307–Ala-320, Gly-327–Ile-340, Thr-350–Thr-363, and Gly-374–His-391. Residues Gly-9 to His-391 are 6 X 23 AA approximate repeats. Positions Lys-21 to Ala-33 are enriched in basic and acidic residues. The interval Lys-21–His-391 is disordered. A compositionally biased stretch (low complexity) spans Gly-34–Ala-59. Residues Thr-49 to Thr-363 are 11 X 14 AA approximate repeats. The span at His-70–His-92 shows a compositional bias: basic and acidic residues. The span at Gln-93–Thr-145 shows a compositional bias: low complexity. Residues Thr-155–His-176 show a composition bias toward basic and acidic residues. Over residues Gln-177 to Thr-196 the composition is skewed to low complexity. Residues Thr-219–His-240 are compositionally biased toward basic and acidic residues. Composition is skewed to low complexity over residues Gln-241 to Thr-260 and His-272 to Ser-282. The span at Thr-283 to His-304 shows a compositional bias: basic and acidic residues. 2 stretches are compositionally biased toward low complexity: residues Gln-305 to Thr-324 and Gln-333 to Gly-351. Over residues Gly-361–Gly-372 the composition is skewed to gly residues. Over residues Ile-373–His-391 the composition is skewed to basic and acidic residues.

The protein belongs to the plant dehydrin family.

In terms of biological role, may reduce intracellular freezing damage during winter by hydrogen-bonding to the lattice of the nascent ice crystals, thus modifying the structure and/or propagation of ice crystals. In Triticum aestivum (Wheat), this protein is Cold-shock protein CS120 (CS120).